We begin with the raw amino-acid sequence, 729 residues long: Fatty acid oxidation complex subunit alpha (729 aa).

The enoyl-CoA hydratase/isomerase stretch occupies residues Met1–Lys189. Residue Asp296 participates in substrate binding. The tract at residues Glu311–Ala729 is 3-hydroxyacyl-CoA dehydrogenase. NAD(+) is bound by residues Met324, Asp343, Val400 to Glu402, Lys407, and Ser429. Catalysis depends on His450, which acts as the For 3-hydroxyacyl-CoA dehydrogenase activity. Position 453 (Asn453) interacts with NAD(+). Substrate contacts are provided by Asn500 and Tyr660. Positions Arg708–Ala729 are disordered.

This sequence in the N-terminal section; belongs to the enoyl-CoA hydratase/isomerase family. It in the C-terminal section; belongs to the 3-hydroxyacyl-CoA dehydrogenase family. As to quaternary structure, heterotetramer of two alpha chains (FadB) and two beta chains (FadA).

The enzyme catalyses a (3S)-3-hydroxyacyl-CoA + NAD(+) = a 3-oxoacyl-CoA + NADH + H(+). It catalyses the reaction a (3S)-3-hydroxyacyl-CoA = a (2E)-enoyl-CoA + H2O. The catalysed reaction is a 4-saturated-(3S)-3-hydroxyacyl-CoA = a (3E)-enoyl-CoA + H2O. It carries out the reaction (3S)-3-hydroxybutanoyl-CoA = (3R)-3-hydroxybutanoyl-CoA. The enzyme catalyses a (3Z)-enoyl-CoA = a 4-saturated (2E)-enoyl-CoA. It catalyses the reaction a (3E)-enoyl-CoA = a 4-saturated (2E)-enoyl-CoA. The protein operates within lipid metabolism; fatty acid beta-oxidation. Functionally, involved in the aerobic and anaerobic degradation of long-chain fatty acids via beta-oxidation cycle. Catalyzes the formation of 3-oxoacyl-CoA from enoyl-CoA via L-3-hydroxyacyl-CoA. It can also use D-3-hydroxyacyl-CoA and cis-3-enoyl-CoA as substrate. This is Fatty acid oxidation complex subunit alpha from Salmonella gallinarum (strain 287/91 / NCTC 13346).